We begin with the raw amino-acid sequence, 132 residues long: uncharacterized protein (132 aa).

A run of 3 helical transmembrane segments spans residues 18–38 (MLFI…FIGI), 50–70 (IIYF…GVFI), and 71–91 (VVPL…LYLI).

It localises to the cell membrane. This is an uncharacterized protein from Bacillus subtilis (strain 168).